A 169-amino-acid chain; its full sequence is MALPWLFNSSPRAGGPSACACLWPRRYPAAGLRTVPVRVSIQPDGDVLVALPRAAVEDGRFDAAAARRLTAQMRRLVGRVTTTNPLWGIDALQALGEAVTALAGLCSGGVLLWNGFEQMTTGRWAHSAATLALLAAPAALAKLRPWLLGAVAPKLFPLALKAGERIVRI.

This is an uncharacterized protein from Azospirillum brasilense.